The following is a 110-amino-acid chain: Iron-sulfur cluster assembly protein CyaY (110 aa).

The protein belongs to the frataxin family.

Functionally, involved in iron-sulfur (Fe-S) cluster assembly. May act as a regulator of Fe-S biogenesis. This is Iron-sulfur cluster assembly protein CyaY from Pseudomonas fluorescens (strain Pf0-1).